We begin with the raw amino-acid sequence, 206 residues long: Dephospho-CoA kinase (206 aa).

A DPCK domain is found at 4–200 (IVALTGGIGS…HRYLKLATAA (197 aa)). 12 to 17 (GSGKST) serves as a coordination point for ATP.

It belongs to the CoaE family.

It is found in the cytoplasm. It catalyses the reaction 3'-dephospho-CoA + ATP = ADP + CoA + H(+). It participates in cofactor biosynthesis; coenzyme A biosynthesis; CoA from (R)-pantothenate: step 5/5. Catalyzes the phosphorylation of the 3'-hydroxyl group of dephosphocoenzyme A to form coenzyme A. The chain is Dephospho-CoA kinase from Yersinia pestis.